The primary structure comprises 398 residues: Acetate kinase 1 (398 aa).

N9 is a binding site for Mg(2+). Residue K16 participates in ATP binding. Position 89 (R89) interacts with substrate. D146 functions as the Proton donor/acceptor in the catalytic mechanism. ATP-binding positions include 206–210 (HLGNG), 281–283 (DCR), and 329–333 (GIGEN). E384 lines the Mg(2+) pocket.

This sequence belongs to the acetokinase family. In terms of assembly, homodimer. Mg(2+) is required as a cofactor. Requires Mn(2+) as cofactor.

Its subcellular location is the cytoplasm. It carries out the reaction acetate + ATP = acetyl phosphate + ADP. It participates in metabolic intermediate biosynthesis; acetyl-CoA biosynthesis; acetyl-CoA from acetate: step 1/2. Its function is as follows. Catalyzes the formation of acetyl phosphate from acetate and ATP. Can also catalyze the reverse reaction. The protein is Acetate kinase 1 of Vibrio vulnificus (strain CMCP6).